Consider the following 934-residue polypeptide: Replication factor C subunit 1 (934 aa).

Positions 1 to 190 are disordered; it reads MSNSDIRSFF…RSSKSKGLPR (190 aa). S27 is subject to Phosphoserine. A compositionally biased stretch (basic residues) spans 29–39; sequence KPKRSLKKKRI. Positions 89-104 are enriched in polar residues; the sequence is GVSTTPDEYFEQQSTR. The segment covering 118–128 has biased composition (basic and acidic residues); the sequence is TTSKDVVHPVK. Over residues 165 to 186 the composition is skewed to low complexity; the sequence is TSKSKSHTTTATTHTSRSSKSK. Residues 236–326 form the BRCT domain; that stretch reads GNSDCLSGIS…PASGGTGAAA (91 aa). Residues T362, C374, 416–423, and N519 each bind ATP; that span reads GPPGIGKT. The segment covering 876-895 has biased composition (acidic residues); that stretch reads AEDEMLEEASDSEAANEEDI. The tract at residues 876-934 is disordered; it reads AEDEMLEEASDSEAANEEDIDLSKDKFISVPKKPKKRTKAKAEASSSSSTSRRSRKKTA.

The protein belongs to the activator 1 large subunit family. Heteropentamer of subunits rfc1, rfc2, rfc3, rfc4 and rfc5 that forms a complex (RFC) with PCNA in the presence of ATP. Interacts with cdc24.

The protein localises to the nucleus. Its subcellular location is the nucleolus. Its function is as follows. The elongation of primed DNA templates by DNA polymerase delta and epsilon requires the action of the accessory proteins PCNA and activator 1. Subunit 1 is essential for cell cycle progression. It may associate with components of the DNA replication machinery and serve to enhance the efficiency of DNA replication. This chain is Replication factor C subunit 1 (rfc1), found in Schizosaccharomyces pombe (strain 972 / ATCC 24843) (Fission yeast).